A 330-amino-acid polypeptide reads, in one-letter code: Ribosomal RNA small subunit methyltransferase H (330 aa).

S-adenosyl-L-methionine contacts are provided by residues G48–H50, D67, L101, D115, and Q122.

The protein belongs to the methyltransferase superfamily. RsmH family.

It localises to the cytoplasm. The enzyme catalyses cytidine(1402) in 16S rRNA + S-adenosyl-L-methionine = N(4)-methylcytidine(1402) in 16S rRNA + S-adenosyl-L-homocysteine + H(+). In terms of biological role, specifically methylates the N4 position of cytidine in position 1402 (C1402) of 16S rRNA. This Pseudarthrobacter chlorophenolicus (strain ATCC 700700 / DSM 12829 / CIP 107037 / JCM 12360 / KCTC 9906 / NCIMB 13794 / A6) (Arthrobacter chlorophenolicus) protein is Ribosomal RNA small subunit methyltransferase H.